Here is a 1087-residue protein sequence, read N- to C-terminus: Transcription factor AP2-Z (1087 aa).

The AP2 DNA-binding region spans 586–682; the sequence is GRVYKVIVRG…IKYNSVPDSL (97 aa).

This sequence belongs to the AP2/ERF transcription factor family. AP2 subfamily.

It is found in the nucleus. The protein localises to the chromosome. In terms of biological role, transcription factor which binds the 5'-[TC][AC]TG[AT]AC[AG]-3' motif. During the mosquito vector stage, plays an essential role in the zygote for de novo transcription of genes required for ookinete formation. This Plasmodium berghei (strain Anka) protein is Transcription factor AP2-Z.